Here is a 289-residue protein sequence, read N- to C-terminus: MFFEIALIGTTASGKTYIADTLAREFDAVVLSLDSLCVYKEINIASAKPSQDDLASIKYFGVNLLSVNEHFNVELFIREYQKAKEFALARNLPLIIVGGTGFYLKTMIDGLSEKTLESKSSLNNDEIYTLLLNIDPNYKIEKNDTYRLKKWLGIYEQTREIPSEFLKRTQKTGVLKDIEIYELAWDKEILKKRIQTRTKEMLDNGLLDEAKILFYKFDHKLKALNSIGLKECKEYLDGEISFKDLENLITIHTTQLAKRQRTFNKKFQSKALEFDKALATLRMKFSIEK.

9-16 (GTTASGKT) contributes to the ATP binding site. 11–16 (TASGKT) serves as a coordination point for substrate. Residues 34–37 (DSLC) are interaction with substrate tRNA.

This sequence belongs to the IPP transferase family. As to quaternary structure, monomer. The cofactor is Mg(2+).

The enzyme catalyses adenosine(37) in tRNA + dimethylallyl diphosphate = N(6)-dimethylallyladenosine(37) in tRNA + diphosphate. Its function is as follows. Catalyzes the transfer of a dimethylallyl group onto the adenine at position 37 in tRNAs that read codons beginning with uridine, leading to the formation of N6-(dimethylallyl)adenosine (i(6)A). The protein is tRNA dimethylallyltransferase of Campylobacter jejuni subsp. doylei (strain ATCC BAA-1458 / RM4099 / 269.97).